Here is a 273-residue protein sequence, read N- to C-terminus: Dermonecrotic toxin LhSicTox-alphaIA2avii (273 aa).

Histidine 5 is a catalytic residue. The Mg(2+) site is built by glutamate 25 and aspartate 27. Residue histidine 41 is the Nucleophile of the active site. 2 cysteine pairs are disulfide-bonded: cysteine 45–cysteine 51 and cysteine 47–cysteine 190. Aspartate 85 provides a ligand contact to Mg(2+).

It belongs to the arthropod phospholipase D family. Class II subfamily. Mg(2+) is required as a cofactor. As to expression, expressed by the venom gland.

The protein resides in the secreted. The enzyme catalyses an N-(acyl)-sphingosylphosphocholine = an N-(acyl)-sphingosyl-1,3-cyclic phosphate + choline. The catalysed reaction is an N-(acyl)-sphingosylphosphoethanolamine = an N-(acyl)-sphingosyl-1,3-cyclic phosphate + ethanolamine. It carries out the reaction a 1-acyl-sn-glycero-3-phosphocholine = a 1-acyl-sn-glycero-2,3-cyclic phosphate + choline. It catalyses the reaction a 1-acyl-sn-glycero-3-phosphoethanolamine = a 1-acyl-sn-glycero-2,3-cyclic phosphate + ethanolamine. Functionally, dermonecrotic toxins cleave the phosphodiester linkage between the phosphate and headgroup of certain phospholipids (sphingolipid and lysolipid substrates), forming an alcohol (often choline) and a cyclic phosphate. This toxin acts on sphingomyelin (SM). It may also act on ceramide phosphoethanolamine (CPE), lysophosphatidylcholine (LPC) and lysophosphatidylethanolamine (LPE), but not on lysophosphatidylserine (LPS), and lysophosphatidylglycerol (LPG). It acts by transphosphatidylation, releasing exclusively cyclic phosphate products as second products. Induces dermonecrosis, hemolysis, increased vascular permeability, edema, inflammatory response, and platelet aggregation. The sequence is that of Dermonecrotic toxin LhSicTox-alphaIA2avii from Loxosceles hirsuta (Recluse spider).